The primary structure comprises 481 residues: Cytochrome P450 monooygenase 2 (481 aa).

The chain crosses the membrane as a helical span at residues 12-32; sequence GSQLLPFYIAIFVFTLVPWAI. Cys418 is a binding site for heme.

This sequence belongs to the cytochrome P450 family. The cofactor is heme.

It is found in the membrane. It functions in the pathway plant hormone biosynthesis; gibberellin biosynthesis. Its function is as follows. Gibberellin 20-oxidase; part of the gene cluster that mediates the biosynthesis of gibberellins (GAs), diterpenoids that may provide a selective advantage during infection of the preferred host plant, rice. Gibberellins (GAs) are diterpenoids and are synthesized via the mevalonate pathway. Biosynthesis of the major metabolite GA3 (gibberellic acid) from geranylgeranyl diphosphate (GGPP) requires 13 steps. The GGPP produced by the geranylgeranyl diphosphate synthase GGS2 is converted to ent-kaurene via ent-copalyldiphosphate in a two-step cyclization reaction performed by the bifunctional ent-copalyl diphosphate synthase/ent-kaurene synthase enzyme (CPS/KS). Ent-Kaurene is metabolized to GAs by a series of oxidation reactions catalyzed by cytochrome P450 monooxygenases. Cytochrome P450 monooxygenase P450-4 is an ent-kaurene oxidase that catalyzes the three oxidation steps between ent-kaurene and ent-kaurenoic acid. The highly multifunctional cytochrome P450 monooxygenase P450-1 then catalyzes four steps involving oxidation at two carbon atoms, in the main pathway from ent-kaurenoic acid to GA14 via GA12-aldehyde as well as producing kaurenolides and fujenoic acids as by-products. The cytochrome P450 monooxygenase P450-2 then converts GA14 to GA4 by removal of C-20. GA4 is further converted to GA7 by the GA4 desaturase DES via 1,2-desaturation before cytochrome P450 monooxygenase P450-3, a 13-hydroxylase, hydroxylates GA7 to GA3, the final product of the GA-biosynthetic pathway. In Gibberella fujikuroi (strain CBS 195.34 / IMI 58289 / NRRL A-6831) (Bakanae and foot rot disease fungus), this protein is Cytochrome P450 monooygenase 2.